The primary structure comprises 737 residues: Phosphoribosylformylglycinamidine synthase subunit PurL (737 aa).

The active site involves His48. ATP contacts are provided by Tyr51 and Lys90. Glu92 lines the Mg(2+) pocket. Substrate contacts are provided by residues 93–96 (SHNH) and Arg115. Catalysis depends on His94, which acts as the Proton acceptor. Asp116 is a binding site for Mg(2+). Gln244 is a substrate binding site. Asp272 contributes to the Mg(2+) binding site. 316-318 (ESQ) lines the substrate pocket. Residues Asp500 and Gly537 each coordinate ATP. Asn538 is a Mg(2+) binding site. Ser540 contacts substrate.

This sequence belongs to the FGAMS family. In terms of assembly, monomer. Part of the FGAM synthase complex composed of 1 PurL, 1 PurQ and 2 PurS subunits.

The protein resides in the cytoplasm. The catalysed reaction is N(2)-formyl-N(1)-(5-phospho-beta-D-ribosyl)glycinamide + L-glutamine + ATP + H2O = 2-formamido-N(1)-(5-O-phospho-beta-D-ribosyl)acetamidine + L-glutamate + ADP + phosphate + H(+). Its pathway is purine metabolism; IMP biosynthesis via de novo pathway; 5-amino-1-(5-phospho-D-ribosyl)imidazole from N(2)-formyl-N(1)-(5-phospho-D-ribosyl)glycinamide: step 1/2. Its function is as follows. Part of the phosphoribosylformylglycinamidine synthase complex involved in the purines biosynthetic pathway. Catalyzes the ATP-dependent conversion of formylglycinamide ribonucleotide (FGAR) and glutamine to yield formylglycinamidine ribonucleotide (FGAM) and glutamate. The FGAM synthase complex is composed of three subunits. PurQ produces an ammonia molecule by converting glutamine to glutamate. PurL transfers the ammonia molecule to FGAR to form FGAM in an ATP-dependent manner. PurS interacts with PurQ and PurL and is thought to assist in the transfer of the ammonia molecule from PurQ to PurL. The sequence is that of Phosphoribosylformylglycinamidine synthase subunit PurL from Sulfurimonas denitrificans (strain ATCC 33889 / DSM 1251) (Thiomicrospira denitrificans (strain ATCC 33889 / DSM 1251)).